The sequence spans 242 residues: Biosynthetic peptidoglycan transglycosylase (242 aa).

Residues 19–39 (ILAALAVFWGGGIALFSVVPV) form a helical membrane-spanning segment.

Belongs to the glycosyltransferase 51 family.

The protein localises to the cell inner membrane. It carries out the reaction [GlcNAc-(1-&gt;4)-Mur2Ac(oyl-L-Ala-gamma-D-Glu-L-Lys-D-Ala-D-Ala)](n)-di-trans,octa-cis-undecaprenyl diphosphate + beta-D-GlcNAc-(1-&gt;4)-Mur2Ac(oyl-L-Ala-gamma-D-Glu-L-Lys-D-Ala-D-Ala)-di-trans,octa-cis-undecaprenyl diphosphate = [GlcNAc-(1-&gt;4)-Mur2Ac(oyl-L-Ala-gamma-D-Glu-L-Lys-D-Ala-D-Ala)](n+1)-di-trans,octa-cis-undecaprenyl diphosphate + di-trans,octa-cis-undecaprenyl diphosphate + H(+). It functions in the pathway cell wall biogenesis; peptidoglycan biosynthesis. Its function is as follows. Peptidoglycan polymerase that catalyzes glycan chain elongation from lipid-linked precursors. The chain is Biosynthetic peptidoglycan transglycosylase from Salmonella paratyphi B (strain ATCC BAA-1250 / SPB7).